We begin with the raw amino-acid sequence, 110 residues long: Translation initiation factor 1A 3 (110 aa).

The disordered stretch occupies residues 1–29 (MIRKRQSGSNKSVSSGNNQEVTRVRTPRK). Over residues 7–18 (SGSNKSVSSGNN) the composition is skewed to low complexity. The 75-residue stretch at 22-96 (TRVRTPRKDR…SKADVIWKYT (75 aa)) folds into the S1-like domain.

It belongs to the eIF-1A family.

Its function is as follows. Seems to be required for maximal rate of protein biosynthesis. Enhances ribosome dissociation into subunits and stabilizes the binding of the initiator Met-tRNA(I) to 40 S ribosomal subunits. The protein is Translation initiation factor 1A 3 (eIF1A3) of Methanosarcina acetivorans (strain ATCC 35395 / DSM 2834 / JCM 12185 / C2A).